The following is an 87-amino-acid chain: U3-theraphotoxin-Hhn1a 17 (87 aa).

A signal peptide spans methionine 1–alanine 24. The propeptide occupies serine 25–arginine 52. 3 disulfide bridges follow: cysteine 54–cysteine 67, cysteine 61–cysteine 72, and cysteine 66–cysteine 79.

The protein belongs to the neurotoxin 10 (Hwtx-1) family. 51 (Hntx-8) subfamily. Hntx-8 sub-subfamily. As to expression, expressed by the venom gland.

Its subcellular location is the secreted. In terms of biological role, ion channel inhibitor. This Cyriopagopus hainanus (Chinese bird spider) protein is U3-theraphotoxin-Hhn1a 17.